The sequence spans 59 residues: U-actitoxin-Aer2b (59 aa).

Contains 5 disulfide bonds.

The protein resides in the secreted. It is found in the nematocyst. This Anemonia erythraea (Sea anemone) protein is U-actitoxin-Aer2b.